Consider the following 464-residue polypeptide: tRNA modification GTPase MnmE (464 aa).

Positions 27, 90, and 129 each coordinate (6S)-5-formyl-5,6,7,8-tetrahydrofolate. One can recognise a TrmE-type G domain in the interval 222–384 (GVALVLAGSV…LYDKIRALIS (163 aa)). GTP is bound by residues 232-237 (NAGKSS), 251-257 (SSYPGTT), and 276-279 (DTAG). Residues S236 and T257 each contribute to the Mg(2+) site. Position 464 (K464) interacts with (6S)-5-formyl-5,6,7,8-tetrahydrofolate.

It belongs to the TRAFAC class TrmE-Era-EngA-EngB-Septin-like GTPase superfamily. TrmE GTPase family. Homodimer. Heterotetramer of two MnmE and two MnmG subunits. It depends on K(+) as a cofactor.

It localises to the cytoplasm. Exhibits a very high intrinsic GTPase hydrolysis rate. Involved in the addition of a carboxymethylaminomethyl (cmnm) group at the wobble position (U34) of certain tRNAs, forming tRNA-cmnm(5)s(2)U34. This is tRNA modification GTPase MnmE from Borreliella burgdorferi (strain ATCC 35210 / DSM 4680 / CIP 102532 / B31) (Borrelia burgdorferi).